A 244-amino-acid chain; its full sequence is Glycoprotein 3 (244 aa).

Functionally, although P4 acquires its capsid proteins from helper phages such as P2, it possesses the ability to assemble capsids that are only one-third the size of the helper's capsid. The sid protein is responsible for the assembly of P4-sized shells. It forms a P4-specific scaffold with icosahedral symmetry on the outside of the procapsid-like particles. The chain is Glycoprotein 3 (sid) from Enterobacteria phage P4 (Bacteriophage P4).